Consider the following 127-residue polypeptide: Small ribosomal subunit protein uS13 (127 aa).

The interval 93–127 is disordered; that stretch reads RQGLPVRGQRTRTNGRTRRGRRVTVAGKKKAPAKK. Basic residues predominate over residues 101–127; the sequence is QRTRTNGRTRRGRRVTVAGKKKAPAKK.

The protein belongs to the universal ribosomal protein uS13 family. In terms of assembly, part of the 30S ribosomal subunit. Forms a loose heterodimer with protein S19. Forms two bridges to the 50S subunit in the 70S ribosome.

Its function is as follows. Located at the top of the head of the 30S subunit, it contacts several helices of the 16S rRNA. In the 70S ribosome it contacts the 23S rRNA (bridge B1a) and protein L5 of the 50S subunit (bridge B1b), connecting the 2 subunits; these bridges are implicated in subunit movement. Contacts the tRNAs in the A and P-sites. The polypeptide is Small ribosomal subunit protein uS13 (Crocosphaera subtropica (strain ATCC 51142 / BH68) (Cyanothece sp. (strain ATCC 51142))).